The following is a 395-amino-acid chain: Chalcone synthase (395 aa).

Val-2 is modified (N-acetylvaline). The residue at position 2 (Val-2) is an N-acetylalanine. Cys-169 is an active-site residue.

This sequence belongs to the thiolase-like superfamily. Chalcone/stilbene synthases family.

It catalyses the reaction (E)-4-coumaroyl-CoA + 3 malonyl-CoA + 3 H(+) = 2',4,4',6'-tetrahydroxychalcone + 3 CO2 + 4 CoA. It functions in the pathway secondary metabolite biosynthesis; flavonoid biosynthesis. The primary product of this enzyme is 4,2',4',6'-tetrahydroxychalcone (also termed naringenin-chalcone or chalcone) which can under specific conditions spontaneously isomerize into naringenin. The sequence is that of Chalcone synthase (CHS) from Arabidopsis thaliana (Mouse-ear cress).